A 321-amino-acid polypeptide reads, in one-letter code: Methionyl-tRNA formyltransferase (321 aa).

112–115 contacts (6S)-5,6,7,8-tetrahydrofolate; that stretch reads SILP.

This sequence belongs to the Fmt family.

The enzyme catalyses L-methionyl-tRNA(fMet) + (6R)-10-formyltetrahydrofolate = N-formyl-L-methionyl-tRNA(fMet) + (6S)-5,6,7,8-tetrahydrofolate + H(+). Functionally, attaches a formyl group to the free amino group of methionyl-tRNA(fMet). The formyl group appears to play a dual role in the initiator identity of N-formylmethionyl-tRNA by promoting its recognition by IF2 and preventing the misappropriation of this tRNA by the elongation apparatus. The polypeptide is Methionyl-tRNA formyltransferase (Shewanella piezotolerans (strain WP3 / JCM 13877)).